Reading from the N-terminus, the 324-residue chain is DNA repair and recombination protein RadA (324 aa).

114-121 (GEFGSGKT) provides a ligand contact to ATP.

It belongs to the eukaryotic RecA-like protein family.

Functionally, involved in DNA repair and in homologous recombination. Binds and assemble on single-stranded DNA to form a nucleoprotein filament. Hydrolyzes ATP in a ssDNA-dependent manner and promotes DNA strand exchange between homologous DNA molecules. This chain is DNA repair and recombination protein RadA, found in Saccharolobus islandicus (strain Y.N.15.51 / Yellowstone #2) (Sulfolobus islandicus).